The primary structure comprises 398 residues: Phosphoglycerate kinase (398 aa).

Residues 21–23 (DFN), Arg-36, 59–62 (HLGR), Arg-119, and Arg-157 each bind substrate. Residues Lys-208, Gly-296, Glu-327, and 354–357 (GGDS) each bind ATP.

It belongs to the phosphoglycerate kinase family. In terms of assembly, monomer.

It is found in the cytoplasm. The catalysed reaction is (2R)-3-phosphoglycerate + ATP = (2R)-3-phospho-glyceroyl phosphate + ADP. It participates in carbohydrate degradation; glycolysis; pyruvate from D-glyceraldehyde 3-phosphate: step 2/5. The protein is Phosphoglycerate kinase of Streptococcus agalactiae serotype Ia (strain ATCC 27591 / A909 / CDC SS700).